A 353-amino-acid chain; its full sequence is Photosystem II D2 protein (353 aa).

Thr-2 is subject to N-acetylthreonine. Thr-2 carries the post-translational modification Phosphothreonine. The helical transmembrane segment at 41–61 (CAYFALGGWFTGTTFVTSWYT) threads the bilayer. Residue His-118 coordinates chlorophyll a. The helical transmembrane segment at 125-141 (GFMLRQFELARSVQLRP) threads the bilayer. Residues Gln-130 and Asn-143 each coordinate pheophytin a. Residues 153 to 166 (VFVSVFFIYPLGQS) traverse the membrane as a helical segment. His-198 provides a ligand contact to chlorophyll a. Residues 208-228 (AALLCAIHGATVENTLFEDGD) form a helical membrane-spanning segment. Residues His-215 and Phe-262 each coordinate a plastoquinone. His-215 contacts Fe cation. His-269 lines the Fe cation pocket. Residues 279-295 (GLWMSALGVVGLALNLR) form a helical membrane-spanning segment.

The protein belongs to the reaction center PufL/M/PsbA/D family. As to quaternary structure, PSII is composed of 1 copy each of membrane proteins PsbA, PsbB, PsbC, PsbD, PsbE, PsbF, PsbH, PsbI, PsbJ, PsbK, PsbL, PsbM, PsbT, PsbX, PsbY, PsbZ, Psb30/Ycf12, at least 3 peripheral proteins of the oxygen-evolving complex and a large number of cofactors. It forms dimeric complexes. It depends on The D1/D2 heterodimer binds P680, chlorophylls that are the primary electron donor of PSII, and subsequent electron acceptors. It shares a non-heme iron and each subunit binds pheophytin, quinone, additional chlorophylls, carotenoids and lipids. There is also a Cl(-1) ion associated with D1 and D2, which is required for oxygen evolution. The PSII complex binds additional chlorophylls, carotenoids and specific lipids. as a cofactor.

It localises to the plastid membrane. The catalysed reaction is 2 a plastoquinone + 4 hnu + 2 H2O = 2 a plastoquinol + O2. Its function is as follows. Photosystem II (PSII) is a light-driven water:plastoquinone oxidoreductase that uses light energy to abstract electrons from H(2)O, generating O(2) and a proton gradient subsequently used for ATP formation. It consists of a core antenna complex that captures photons, and an electron transfer chain that converts photonic excitation into a charge separation. The D1/D2 (PsbA/PsbD) reaction center heterodimer binds P680, the primary electron donor of PSII as well as several subsequent electron acceptors. D2 is needed for assembly of a stable PSII complex. The chain is Photosystem II D2 protein from Cuscuta exaltata (Tall dodder).